An 885-amino-acid polypeptide reads, in one-letter code: Aconitate hydratase A (885 aa).

[4Fe-4S] cluster-binding residues include Cys-425, Cys-491, and Cys-494.

It belongs to the aconitase/IPM isomerase family. In terms of assembly, monomer. The cofactor is [4Fe-4S] cluster.

It catalyses the reaction citrate = D-threo-isocitrate. It carries out the reaction (2S,3R)-3-hydroxybutane-1,2,3-tricarboxylate = 2-methyl-cis-aconitate + H2O. It participates in carbohydrate metabolism; tricarboxylic acid cycle; isocitrate from oxaloacetate: step 2/2. The protein operates within organic acid metabolism; propanoate degradation. In terms of biological role, involved in the catabolism of short chain fatty acids (SCFA) via the tricarboxylic acid (TCA)(acetyl degradation route) and probably the 2-methylcitrate cycle I (propionate degradation route). Catalyzes the reversible isomerization of citrate to isocitrate via cis-aconitate. Could catalyze the hydration of 2-methyl-cis-aconitate to yield (2R,3S)-2-methylisocitrate. The apo form of AcnA functions as a RNA-binding regulatory protein. The sequence is that of Aconitate hydratase A (acnA) from Rickettsia bellii (strain RML369-C).